The following is a 473-amino-acid chain: 3-isopropylmalate dehydratase large subunit (473 aa).

3 residues coordinate [4Fe-4S] cluster: Cys354, Cys414, and Cys417.

Belongs to the aconitase/IPM isomerase family. LeuC type 1 subfamily. As to quaternary structure, heterodimer of LeuC and LeuD. [4Fe-4S] cluster is required as a cofactor.

The catalysed reaction is (2R,3S)-3-isopropylmalate = (2S)-2-isopropylmalate. Its pathway is amino-acid biosynthesis; L-leucine biosynthesis; L-leucine from 3-methyl-2-oxobutanoate: step 2/4. Catalyzes the isomerization between 2-isopropylmalate and 3-isopropylmalate, via the formation of 2-isopropylmaleate. This Mycobacterium marinum (strain ATCC BAA-535 / M) protein is 3-isopropylmalate dehydratase large subunit.